The primary structure comprises 87 residues: uncharacterized protein (87 aa).

This is an uncharacterized protein from Escherichia coli.